Consider the following 59-residue polypeptide: Large ribosomal subunit protein uL30 (59 aa).

Belongs to the universal ribosomal protein uL30 family. Part of the 50S ribosomal subunit.

In Clostridium botulinum (strain ATCC 19397 / Type A), this protein is Large ribosomal subunit protein uL30.